Reading from the N-terminus, the 145-residue chain is 3-hydroxyacyl-[acyl-carrier-protein] dehydratase FabZ (145 aa).

The active site involves H48.

This sequence belongs to the thioester dehydratase family. FabZ subfamily.

Its subcellular location is the cytoplasm. The enzyme catalyses a (3R)-hydroxyacyl-[ACP] = a (2E)-enoyl-[ACP] + H2O. Functionally, involved in unsaturated fatty acids biosynthesis. Catalyzes the dehydration of short chain beta-hydroxyacyl-ACPs and long chain saturated and unsaturated beta-hydroxyacyl-ACPs. This chain is 3-hydroxyacyl-[acyl-carrier-protein] dehydratase FabZ, found in Geobacillus sp. (strain WCH70).